A 100-amino-acid polypeptide reads, in one-letter code: Trp operon repressor homolog (100 aa).

The DNA-binding element occupies 59–82 (QRQISQMLGVGIATITRGSNELKS). Over residues 78-93 (NELKSKSDTDKDKLKT) the composition is skewed to basic and acidic residues. The segment at 78–100 (NELKSKSDTDKDKLKTLLEQGAQ) is disordered.

The protein belongs to the TrpR family. As to quaternary structure, homodimer.

Its subcellular location is the cytoplasm. Functionally, this protein is an aporepressor. When complexed with L-tryptophan it binds the operator region of the trp operon and prevents the initiation of transcription. The polypeptide is Trp operon repressor homolog (Vibrio campbellii (strain ATCC BAA-1116)).